The primary structure comprises 72 residues: UPF0270 protein YheU (72 aa).

Belongs to the UPF0270 family.

This is UPF0270 protein YheU from Salmonella arizonae (strain ATCC BAA-731 / CDC346-86 / RSK2980).